The primary structure comprises 498 residues: Glycerol kinase (498 aa).

ADP is bound at residue threonine 12. Residues threonine 12, threonine 13, and serine 14 each coordinate ATP. Sn-glycerol 3-phosphate is bound at residue threonine 12. Residue arginine 16 participates in ADP binding. Residues arginine 82, glutamate 83, tyrosine 135, and aspartate 245 each coordinate sn-glycerol 3-phosphate. 5 residues coordinate glycerol: arginine 82, glutamate 83, tyrosine 135, aspartate 245, and glutamine 246. Residues threonine 267 and glycine 310 each coordinate ADP. The ATP site is built by threonine 267, glycine 310, glutamine 314, and glycine 411. Residues glycine 411 and asparagine 415 each coordinate ADP.

This sequence belongs to the FGGY kinase family. Homotetramer and homodimer (in equilibrium).

The enzyme catalyses glycerol + ATP = sn-glycerol 3-phosphate + ADP + H(+). It participates in polyol metabolism; glycerol degradation via glycerol kinase pathway; sn-glycerol 3-phosphate from glycerol: step 1/1. With respect to regulation, activated by phosphorylation and inhibited by fructose 1,6-bisphosphate (FBP). Its function is as follows. Key enzyme in the regulation of glycerol uptake and metabolism. Catalyzes the phosphorylation of glycerol to yield sn-glycerol 3-phosphate. The sequence is that of Glycerol kinase from Clostridium botulinum (strain Eklund 17B / Type B).